The sequence spans 171 residues: Shikimate kinase (171 aa).

14–19 contributes to the ATP binding site; sequence GAGKST. Ser-18 contacts Mg(2+). Substrate-binding residues include Asp-36, Arg-60, and Gly-82. An ATP-binding site is contributed by Arg-120. Arg-139 is a binding site for substrate. Gln-156 contributes to the ATP binding site.

Belongs to the shikimate kinase family. Monomer. Requires Mg(2+) as cofactor.

It localises to the cytoplasm. It carries out the reaction shikimate + ATP = 3-phosphoshikimate + ADP + H(+). It functions in the pathway metabolic intermediate biosynthesis; chorismate biosynthesis; chorismate from D-erythrose 4-phosphate and phosphoenolpyruvate: step 5/7. Functionally, catalyzes the specific phosphorylation of the 3-hydroxyl group of shikimic acid using ATP as a cosubstrate. In Shewanella denitrificans (strain OS217 / ATCC BAA-1090 / DSM 15013), this protein is Shikimate kinase.